The primary structure comprises 104 residues: Phosphocarrier protein HPr (104 aa).

An HPr domain is found at 17-104 (ELSAIFMIRN…EVFNSGFGEL (88 aa)). His-31 serves as the catalytic Pros-phosphohistidine intermediate.

Belongs to the HPr family.

The protein localises to the cytoplasm. General (non sugar-specific) component of the phosphoenolpyruvate-dependent sugar phosphotransferase system (sugar PTS). This major carbohydrate active-transport system catalyzes the phosphorylation of incoming sugar substrates concomitantly with their translocation across the cell membrane. The phosphoryl group from phosphoenolpyruvate (PEP) is transferred to the phosphoryl carrier protein HPr by enzyme I. Phospho-HPr then transfers it to the PTS EIIA domain. The chain is Phosphocarrier protein HPr (ptsH) from Chlamydia muridarum (strain MoPn / Nigg).